Reading from the N-terminus, the 299-residue chain is Large ribosomal subunit protein uL18 (299 aa).

It belongs to the universal ribosomal protein uL18 family. Component of the large ribosomal subunit (LSU). Interacts with Fmr1 to form the RNA-induced silencing complex (RISC), a ribonucleoprotein (RNP) complex involved in translation regulation, other components of the complex are Rm62, RpL11, AGO2 and Dcr-1.

It localises to the cytoplasm. It is found in the nucleus. Functionally, component of the ribosome, a large ribonucleoprotein complex responsible for the synthesis of proteins in the cell. The small ribosomal subunit (SSU) binds messenger RNAs (mRNAs) and translates the encoded message by selecting cognate aminoacyl-transfer RNA (tRNA) molecules. The large subunit (LSU) contains the ribosomal catalytic site termed the peptidyl transferase center (PTC), which catalyzes the formation of peptide bonds, thereby polymerizing the amino acids delivered by tRNAs into a polypeptide chain. The nascent polypeptides leave the ribosome through a tunnel in the LSU and interact with protein factors that function in enzymatic processing, targeting, and the membrane insertion of nascent chains at the exit of the ribosomal tunnel. The protein is Large ribosomal subunit protein uL18 (RpL5) of Drosophila melanogaster (Fruit fly).